A 306-amino-acid chain; its full sequence is Ribonuclease Z (306 aa).

Zn(2+)-binding residues include H63, H65, D67, H68, H140, D211, and H269. D67 serves as the catalytic Proton acceptor.

Belongs to the RNase Z family. As to quaternary structure, homodimer. Zn(2+) is required as a cofactor.

The enzyme catalyses Endonucleolytic cleavage of RNA, removing extra 3' nucleotides from tRNA precursor, generating 3' termini of tRNAs. A 3'-hydroxy group is left at the tRNA terminus and a 5'-phosphoryl group is left at the trailer molecule.. In terms of biological role, zinc phosphodiesterase, which displays some tRNA 3'-processing endonuclease activity. Probably involved in tRNA maturation, by removing a 3'-trailer from precursor tRNA. This chain is Ribonuclease Z, found in Listeria innocua serovar 6a (strain ATCC BAA-680 / CLIP 11262).